The sequence spans 406 residues: Cysteine desulfurase (406 aa).

N6-(pyridoxal phosphate)lysine is present on K226. C364 serves as the catalytic Cysteine persulfide intermediate.

It belongs to the class-V pyridoxal-phosphate-dependent aminotransferase family. Csd subfamily. In terms of assembly, homodimer. Interacts with SufE and the SufBCD complex composed of SufB, SufC and SufD. The interaction with SufE is required to mediate the direct transfer of the sulfur atom from the S-sulfanylcysteine. The cofactor is pyridoxal 5'-phosphate.

It is found in the cytoplasm. The enzyme catalyses (sulfur carrier)-H + L-cysteine = (sulfur carrier)-SH + L-alanine. It carries out the reaction L-selenocysteine + AH2 = hydrogenselenide + L-alanine + A + H(+). It participates in cofactor biosynthesis; iron-sulfur cluster biosynthesis. Its function is as follows. Cysteine desulfurases mobilize the sulfur from L-cysteine to yield L-alanine, an essential step in sulfur metabolism for biosynthesis of a variety of sulfur-containing biomolecules. Component of the suf operon, which is activated and required under specific conditions such as oxidative stress and iron limitation. Acts as a potent selenocysteine lyase in vitro, that mobilizes selenium from L-selenocysteine. Selenocysteine lyase activity is however unsure in vivo. This Salmonella gallinarum (strain 287/91 / NCTC 13346) protein is Cysteine desulfurase.